The primary structure comprises 112 residues: MIASIGDSAEPPLRRTRRAQQQDRPPTQLAAAEMLHNMNGAETAASFIVKDASENKIASLTTLGNQSIAARKLVESLQAGAPTIKLNREDTVNVLKFLNDVYTNQLEVVNIS.

The segment at 1–27 is disordered; sequence MIASIGDSAEPPLRRTRRAQQQDRPPT.

This is an uncharacterized protein from Orgyia pseudotsugata multicapsid polyhedrosis virus (OpMNPV).